The sequence spans 217 residues: Small ribosomal subunit protein uS3c (217 aa).

Residues 43 to 117 (IKNYVQKNRK…KLNIAITRIA (75 aa)) enclose the KH type-2 domain.

The protein belongs to the universal ribosomal protein uS3 family. In terms of assembly, part of the 30S ribosomal subunit.

It localises to the plastid. The protein localises to the chloroplast. The polypeptide is Small ribosomal subunit protein uS3c (rps3) (Ranunculus macranthus (Large buttercup)).